Consider the following 328-residue polypeptide: Malate dehydrogenase (328 aa).

Position 16–22 (16–22 (GAAGQIS)) interacts with NAD(+). The substrate site is built by R97 and R103. Residues N110, Q117, and 134–136 (VGN) each bind NAD(+). The substrate site is built by N136 and R167. H192 functions as the Proton acceptor in the catalytic mechanism.

This sequence belongs to the LDH/MDH superfamily. MDH type 2 family. Homotetramer.

It carries out the reaction (S)-malate + NAD(+) = oxaloacetate + NADH + H(+). Its activity is regulated as follows. Citrate activates the enzyme in the oxidation of malate to oxaloacetate and inhibits it in the reverse reaction. In terms of biological role, catalyzes the reversible oxidation of malate to oxaloacetate. Exhibits higher catalytic efficiency for oxaloacetate reduction than for malate oxidation in vitro. Almost equally active both for NADH and NADPH on the bases of the kcat values at pH 6.5, but catalytic efficiency for oxaloacetate reduction is 50-fold higher with NADH. In Corynebacterium glutamicum (strain ATCC 13032 / DSM 20300 / JCM 1318 / BCRC 11384 / CCUG 27702 / LMG 3730 / NBRC 12168 / NCIMB 10025 / NRRL B-2784 / 534), this protein is Malate dehydrogenase.